Consider the following 293-residue polypeptide: Neugrin (293 aa).

The signal sequence occupies residues Met-1 to Ala-18. Ser-41 is modified (phosphoserine). Disordered stretches follow at residues Asp-177–Asp-210 and Thr-224–Ser-254. N-linked (GlcNAc...) asparagine glycosylation occurs at Asn-185. Residues His-198–Asp-210 show a composition bias toward basic and acidic residues.

Belongs to the neugrin family. Forms a regulatory protein-RNA complex, consisting of RCC1L, NGRN, RPUSD3, RPUSD4, TRUB2, FASTKD2 and 16S mt-rRNA. Interacts with 16S mt-rRNA; this interaction is direct. In terms of tissue distribution, expressed in heart, brain, liver and kidney. In brain, mainly expressed in neurons rather than glial cells.

It is found in the nucleus. It localises to the secreted. The protein resides in the mitochondrion membrane. Plays an essential role in mitochondrial ribosome biogenesis. As a component of a functional protein-RNA module, consisting of RCC1L, NGRN, RPUSD3, RPUSD4, TRUB2, FASTKD2 and 16S mitochondrial ribosomal RNA (16S mt-rRNA), controls 16S mt-rRNA abundance and is required for intra-mitochondrial translation of core subunits of the oxidative phosphorylation system. The protein is Neugrin (Ngrn) of Mus musculus (Mouse).